The sequence spans 56 residues: Large ribosomal subunit protein bL33 (56 aa).

Residues 1-12 (MATKGGRDKIKL) show a composition bias toward basic and acidic residues. A disordered region spans residues 1–24 (MATKGGRDKIKLESTAGTGHFYTT). The segment covering 15–24 (TAGTGHFYTT) has biased composition (polar residues).

It belongs to the bacterial ribosomal protein bL33 family.

This is Large ribosomal subunit protein bL33 from Paracidovorax citrulli (strain AAC00-1) (Acidovorax citrulli).